Reading from the N-terminus, the 191-residue chain is Prostaglandin-H2 D-isomerase (191 aa).

The N-terminal stretch at 1 to 24 (MAALHTLWMGLVLLGVLGVLQTQA) is a signal peptide. Gln-25 carries the pyrrolidone carboxylic acid modification. N-linked (GlcNAc...) asparagine glycosylation is present at Asn-51. The active-site Nucleophile is Cys-65. Asn-78 carries N-linked (GlcNAc...) asparagine glycosylation. Residues Cys-89 and Cys-186 are joined by a disulfide bond.

It belongs to the calycin superfamily. Lipocalin family. As to quaternary structure, monomer.

The protein localises to the rough endoplasmic reticulum. It localises to the nucleus membrane. Its subcellular location is the golgi apparatus. It is found in the cytoplasm. The protein resides in the perinuclear region. The protein localises to the secreted. It carries out the reaction prostaglandin H2 = prostaglandin D2. In terms of biological role, catalyzes the conversion of PGH2 to PGD2, a prostaglandin involved in smooth muscle contraction/relaxation and a potent inhibitor of platelet aggregation. Involved in a variety of CNS functions, such as sedation, NREM sleep and PGE2-induced allodynia, and may have an anti-apoptotic role in oligodendrocytes. Binds small non-substrate lipophilic molecules, including biliverdin, bilirubin, retinal, retinoic acid and thyroid hormone, and may act as a scavenger for harmful hydrophobic molecules and as a secretory retinoid and thyroid hormone transporter. Possibly involved in development and maintenance of the blood-brain, blood-retina, blood-aqueous humor and blood-testis barrier. It is likely to play important roles in both maturation and maintenance of the central nervous system and male reproductive system. Involved in PLA2G3-dependent maturation of mast cells. PLA2G3 is secreted by immature mast cells and acts on nearby fibroblasts upstream to PTDGS to synthesize PGD2, which in turn promotes mast cell maturation and degranulation via PTGDR. This Ursus arctos (Brown bear) protein is Prostaglandin-H2 D-isomerase (PTGDS).